Reading from the N-terminus, the 101-residue chain is MSHNHDHNHDHEVITLVDEQGNETLFEILLTIDGREEFGKNYVLLVPAGAEEDADGEIEIQAYSFTENEDGTEGDLQPIPEDSDAEWDMIEEVFNSFIDEN.

This sequence belongs to the UPF0473 family.

In Streptococcus thermophilus (strain ATCC BAA-491 / LMD-9), this protein is UPF0473 protein STER_1939.